A 176-amino-acid chain; its full sequence is Translation initiation factor IF-3 (176 aa).

The protein belongs to the IF-3 family. In terms of assembly, monomer.

The protein resides in the cytoplasm. In terms of biological role, IF-3 binds to the 30S ribosomal subunit and shifts the equilibrium between 70S ribosomes and their 50S and 30S subunits in favor of the free subunits, thus enhancing the availability of 30S subunits on which protein synthesis initiation begins. The protein is Translation initiation factor IF-3 of Streptococcus pyogenes serotype M4 (strain MGAS10750).